The following is a 673-amino-acid chain: Glycine--tRNA ligase beta subunit (673 aa).

The protein belongs to the class-II aminoacyl-tRNA synthetase family. Tetramer of two alpha and two beta subunits.

It localises to the cytoplasm. It carries out the reaction tRNA(Gly) + glycine + ATP = glycyl-tRNA(Gly) + AMP + diphosphate. The protein is Glycine--tRNA ligase beta subunit of Lactococcus lactis subsp. cremoris (strain SK11).